Consider the following 270-residue polypeptide: MKRIALGVQYDGSAFCGWQSQPHRNTVQDELERALREFARTPVQTVVAGRTDTGVHGLGQVVHFDTELDRADVSWVRGTNSFLPKTISVQWAKPMPDEFHARFSAFERTYYYVLYVHPVRSPMLATRAGWVHTSLDVDAMQKAAAHLLGEHDFSAFRSSQCQAKTPVKHLYQIDVKQQGDFVHFRFRANAFLHHMVRNLMGCLVYIGGGRRPVEWMAEVLASRDRDFAAPTFMPDGLYLAQVGYPEQFAVPAPQTGSVPWNTVWTEQAQT.

D52 serves as the catalytic Nucleophile. Y110 is a binding site for substrate.

This sequence belongs to the tRNA pseudouridine synthase TruA family. In terms of assembly, homodimer.

The catalysed reaction is uridine(38/39/40) in tRNA = pseudouridine(38/39/40) in tRNA. Its function is as follows. Formation of pseudouridine at positions 38, 39 and 40 in the anticodon stem and loop of transfer RNAs. The polypeptide is tRNA pseudouridine synthase A (Paraburkholderia phytofirmans (strain DSM 17436 / LMG 22146 / PsJN) (Burkholderia phytofirmans)).